A 1850-amino-acid chain; its full sequence is Vitellogenin-2 (1850 aa).

The first 15 residues, 1 to 15 (MRGIILALVLTLVGS), serve as a signal peptide directing secretion. The Vitellogenin domain maps to 24–662 (FNSRRSYLYN…SPRTMFPSAI (639 aa)). Residue Asn-604 is glycosylated (N-linked (GlcNAc...) asparagine). Residues 935 to 984 (DAPLDVTEEPFQTSERASREHFAMQGPDSMPRKQSHSSREDLRRSTGKRA) form a disordered region. Asn-1094 carries N-linked (GlcNAc...) asparagine glycosylation. Disordered stretches follow at residues 1115–1313 (GTEP…SSSS) and 1338–1362 (EFPK…SHDT). Low complexity predominate over residues 1122–1143 (TSSSSSSASSTATSSSSSSASS). Over residues 1156–1165 (DQVKQARNKD) the composition is skewed to basic and acidic residues. A compositionally biased stretch (low complexity) spans 1167 to 1266 (SSSSRSSKSS…SRSSSSSSKS (100 aa)). Asn-1177 and Asn-1188 each carry an N-linked (GlcNAc...) asparagine glycan. The segment covering 1267–1277 (SSHHSHSHHSG) has biased composition (basic residues). The span at 1278-1291 (HLNGSSSSSSSSRS) shows a compositional bias: low complexity. A glycan (N-linked (GlcNAc...) asparagine) is linked at Asn-1280. Residues 1338–1350 (EFPKRKLPGDRAT) show a composition bias toward basic and acidic residues. N-linked (GlcNAc...) asparagine glycans are attached at residues Asn-1417, Asn-1597, and Asn-1665. The 178-residue stretch at 1579–1756 (ARCSVSYNKI…SWILEEAPCR (178 aa)) folds into the VWFD domain. Intrachain disulfides connect Cys-1581–Cys-1719 and Cys-1604–Cys-1755.

In terms of processing, phosvitin, an egg yolk storage protein, is one of the most highly phosphorylated (10%) proteins in nature. Cathepsin D is responsible for intraoocytic processing of vitellogenin. Post-translationally, may contain intrachain disulfide bonds. In terms of tissue distribution, after incorporation from serum via a specific receptor, it is cleaved into four fragments, heavy and light chain lipovitellins, phosphovitin and YGP40, and YGP40 is released into the yolk plasma before or during compartmentation of lipovitellin-phosvitin complex into the yolk granule.

In terms of biological role, precursor of the major egg-yolk proteins that are sources of nutrients during early development of oviparous organisms. Functionally, phosvitin is believed to be of importance in sequestering calcium, iron and other cations for the developing embryo. The protein is Vitellogenin-2 (VTG2) of Gallus gallus (Chicken).